Consider the following 1090-residue polypeptide: UPF0507 protein C1Q_01007 (1090 aa).

A VPS9 domain is found at 289–436 (FSVNQLLTDF…FEDFNKNTGN (148 aa)).

It belongs to the UPF0507 family.

The polypeptide is UPF0507 protein C1Q_01007 (Saccharomyces cerevisiae (strain JAY291) (Baker's yeast)).